We begin with the raw amino-acid sequence, 383 residues long: Deoxyhypusine synthase-like protein (383 aa).

Belongs to the deoxyhypusine synthase family.

The protein is Deoxyhypusine synthase-like protein of Nostoc sp. (strain PCC 7120 / SAG 25.82 / UTEX 2576).